The sequence spans 455 residues: Probable Xaa-Pro aminopeptidase GSTUM_00008071001 (455 aa).

Mn(2+) contacts are provided by D251, D262, E386, and E426.

The protein belongs to the peptidase M24B family. Mn(2+) serves as cofactor.

The enzyme catalyses Release of any N-terminal amino acid, including proline, that is linked to proline, even from a dipeptide or tripeptide.. Catalyzes the removal of a penultimate prolyl residue from the N-termini of peptides. This Tuber melanosporum (strain Mel28) (Perigord black truffle) protein is Probable Xaa-Pro aminopeptidase GSTUM_00008071001.